The chain runs to 477 residues: MEEDTGALPRKENFSEWYNDILWRAEIMDVRYPVKGLYVWYPHGFGIRKRAYGVLRDLMDRDHAETMFPLLIPKTEFMKEAEHIKGFEDEVYWVTHGGRNELDVPLALRPTSETAIYPMYALWIRSHTDLPLRLYQVVNTFRYETKHTRPLIRLREITSFKEAHTVHATREEAAAQVETAIALYREFYDTLRVPVILSRRPAWDKFPGADYTIAADTIMPDGKTLQIGTVHMLGDHFSRTYAITYEDANGEQQYAYQTCYGISERSIAAVVSVHGDDKGLVLPPEVAPLEVVIVPIIVGKRRDEVLASAAALEAELRGAGFAVKLDARDMRPGAKYYHWEMRGVPLRVEVGPRDIDANTVVAVARTGKKTTLDRRGVVEGITSVLAEFGEDLSQAARQAMAARITAAETLEETAEAVKSGVAVVHWCGSQECAEKIEAAVDASIIGSDIRSDLIAVSDGPCVACGGEGTSALVARTY.

Belongs to the class-II aminoacyl-tRNA synthetase family. ProS type 3 subfamily. In terms of assembly, homodimer.

The protein localises to the cytoplasm. It carries out the reaction tRNA(Pro) + L-proline + ATP = L-prolyl-tRNA(Pro) + AMP + diphosphate. Catalyzes the attachment of proline to tRNA(Pro) in a two-step reaction: proline is first activated by ATP to form Pro-AMP and then transferred to the acceptor end of tRNA(Pro). This Methanoculleus marisnigri (strain ATCC 35101 / DSM 1498 / JR1) protein is Proline--tRNA ligase.